The sequence spans 587 residues: MPYHRGGDASSQADKLSGIVEESDLYEGFAPHVETSEIKTLDFYNLPKQTGKEPALRSYTEIQQLLQQGKKRDVKNILRENSWPINSPIRAQLWPMLCGQHQTKQQMLDGFYWEMVHQVFGTTELSEKPIMLPAFVDATHCLPYHLTSTGRAVADRIVNVLGYDCPDITYSPVLYPITSILLHFMSEEEAYICLAGLVGSKEKVFINQTKLQHEVTWKTVMQIAKKHTKSATSYFQRICPGLKLERIFMDWCWWILAGLPFQHLVRIMDCYFHEGIKVLYRVALVILNLFHKECQSNNEWSPDNIKNDIGNALIKFCKKIPVSPAKLLHAAFSIRGLSTQYISRIFIKTEMLLKSRSVLTSGSKQLIKSRSSDNLPTSQSQVNIQMMSHTLTIREHFGLPGTKNFIKTWTDRQFLFTLWSWLPVRITMYQPVLLYTTEEHGCSLTTFYVRVEQHEPTLLMIKTCNNEVFGAYCSSRWFERNVKDDKGQRQAYFGTGETFLFSLYPERAKYPWVGIEGDKDLGHSSELFMAADSKMITIGGGEGQAIWMDENIRFGKTDSCKTFNNPPLCPSGDFEIRVLEVYGFVGI.

A 1,2-diacyl-sn-glycero-3-phospho-(1D-myo-inositol) contacts are provided by K75 and R79. One can recognise a Rab-GAP TBC domain in the interval 84–275 (PINSPIRAQL…RIMDCYFHEG (192 aa)). Residues K277, R281, and 335–339 (RGLST) contribute to the a 1,2-diacyl-sn-glycero-3-phospho-(1D-myo-inositol) site. Residues 408-585 (TWTDRQFLFT…IRVLEVYGFV (178 aa)) form the TLDc domain.

In terms of tissue distribution, detected in the larval ventral nerve cord and neuromuscular junction boutons (at protein level).

The protein localises to the cytoplasmic vesicle. It localises to the secretory vesicle. It is found in the synaptic vesicle membrane. The protein resides in the endosome membrane. GTPase-activating protein (GAP) for Rab35 which regulates synaptic vesicle (SV) protein recycling and turnover at the neuromuscular junction boutons and possibly ventral nerve cord via endosomal trafficking. Inhibits Rab35-mediated endosomal sorting which traffics old or dysfunctional SV proteins through a degradative endolysosomal route that involves the ESCRT pathway and the HOPS complex members dor, vps39 and rab7. This function is essential for preventing excessive degradation and turnover of vesicles from the readily releasable pool which leads to increased neurotransmission and eventually neurodegeneration. Preferentially binds phosphoinositides phosphorylated at the D5 position of the inositol ring, such as phosphatidylinositol 4,5-bisphosphate (PIP2) and phosphatidylinositol 3,4,5-trisphosphate (PIP3). Binding to phosphoinositides and thus membrane-association, is required for its function in regulating the turnover of synaptic-vesicle proteins. It is therefore likely that it is recruited to vesicle membranes with high phosphoinositide content and thereby selectively prevents endolysosomal degradation of these vesicles. The chain is GTPase-activating protein skywalker from Drosophila melanogaster (Fruit fly).